Consider the following 372-residue polypeptide: N-methyl-L-tryptophan oxidase (372 aa).

Residue 4–34 coordinates FAD; that stretch reads DLIIIGSGSVGAAAGYYATRAGLNVLMTDAH. Residue Cys308 is modified to S-8alpha-FAD cysteine.

Belongs to the MSOX/MTOX family. MTOX subfamily. Monomer. The cofactor is FAD.

It catalyses the reaction N(alpha)-methyl-L-tryptophan + O2 + H2O = L-tryptophan + formaldehyde + H2O2. Catalyzes the oxidative demethylation of N-methyl-L-tryptophan. The polypeptide is N-methyl-L-tryptophan oxidase (Shigella sonnei (strain Ss046)).